The primary structure comprises 457 residues: MERDLSQLWQNCLLQLQDQISSSDFGLWLRPLQADTSMPNTIVLYASNMFVKSWVENNYLAQITKIAQDLSNNTDLVIKVQEGSKPAARKVVAQQEIANTPVQHSAPMPENEPQAAFRSNLNQHHLFENFVEGKSNQLARAVGQKVANRPGDKSANPLFLYGGTGLGKTHLLHAVGNGIIAGNSNARVVYIHAERFVQEYVKALKAERIENFKKFYRSLDALLIDDIQFFAGKDGTQEEFFNTFNSLFEGEKQIILTSDRYPREIEKIDDRLKSRFSWGLSIAIEPPDLETRVAILMKKAEEKNIYLPEEVAFFIGQKLRTNVRELEGALNRVHANADFTGKAITIDFVRETLKDMLALQDKLVTVENIQKMVAEYYRIKVSDLKSKNRSRSIARPRQLAMALAKELTNRSLPEIGKAFGDRDHTTVLHACRTIAALRDDDNNIQEDWSNLIRTLSA.

The interval 1–81 (MERDLSQLWQ…NNTDLVIKVQ (81 aa)) is domain I, interacts with DnaA modulators. Residues 81–119 (QEGSKPAARKVVAQQEIANTPVQHSAPMPENEPQAAFRS) are domain II. The domain III, AAA+ region stretch occupies residues 120-337 (NLNQHHLFEN…GALNRVHANA (218 aa)). ATP contacts are provided by G165, G167, K168, and T169. The segment at 338–457 (DFTGKAITID…WSNLIRTLSA (120 aa)) is domain IV, binds dsDNA.

It belongs to the DnaA family. As to quaternary structure, oligomerizes as a right-handed, spiral filament on DNA at oriC.

The protein resides in the cytoplasm. Plays an essential role in the initiation and regulation of chromosomal replication. ATP-DnaA binds to the origin of replication (oriC) to initiate formation of the DNA replication initiation complex once per cell cycle. Binds the DnaA box (a 9 base pair repeat at the origin) and separates the double-stranded (ds)DNA. Forms a right-handed helical filament on oriC DNA; dsDNA binds to the exterior of the filament while single-stranded (ss)DNA is stabiized in the filament's interior. The ATP-DnaA-oriC complex binds and stabilizes one strand of the AT-rich DNA unwinding element (DUE), permitting loading of DNA polymerase. After initiation quickly degrades to an ADP-DnaA complex that is not apt for DNA replication. Binds acidic phospholipids. In Mannheimia succiniciproducens (strain KCTC 0769BP / MBEL55E), this protein is Chromosomal replication initiator protein DnaA.